Reading from the N-terminus, the 133-residue chain is ATP synthase epsilon chain, chloroplastic (133 aa).

Belongs to the ATPase epsilon chain family. As to quaternary structure, F-type ATPases have 2 components, CF(1) - the catalytic core - and CF(0) - the membrane proton channel. CF(1) has five subunits: alpha(3), beta(3), gamma(1), delta(1), epsilon(1). CF(0) has three main subunits: a, b and c.

Its subcellular location is the plastid. The protein localises to the chloroplast thylakoid membrane. Produces ATP from ADP in the presence of a proton gradient across the membrane. The sequence is that of ATP synthase epsilon chain, chloroplastic from Psilotum nudum (Whisk fern).